We begin with the raw amino-acid sequence, 315 residues long: MRMCDRGVQMLITTVGAFAAFSLMTIAVGTDYWLYSRGVCRTKSTSDNETSRKNEEVMTHSGLWRTCCLEGAFRGVCKKIDHFPEDADYEQDTAEYLLRAVRASSVFPILSVTLLFFGGLCVAASEFHRSRHNVILSAGIFFVSAGLSNIIGIIVYISANAGDPGQRDSKKSYSYGWSFYFGAFSFIIAEIVGVVAVHIYIEKHQQLRAKSHSELLKKSTFARLPPYRYRFRRRSSSRSTEPRSRDLSPISKGFHTIPSTDISMFTLSRDPSKITMGTLLNSDRDHAFLQFHNSTPKEFKESLHNNPANRRTTPV.

4 consecutive transmembrane segments (helical) span residues 8 to 28, 104 to 124, 135 to 155, and 181 to 201; these read VQML…TIAV, SSVF…CVAA, ILSA…GIIV, and FGAF…HIYI. Residues 232–252 form a disordered region; it reads RRRSSSRSTEPRSRDLSPISK. Phosphoserine is present on Ser248.

The protein belongs to the PMP-22/EMP/MP20 family. CACNG subfamily. In terms of assembly, the L-type calcium channel is composed of five subunits: alpha-1, alpha-2/delta, beta and gamma. Acts as an auxiliary subunit for AMPA-selective glutamate receptors (AMPARs). Found in a complex with GRIA1, GRIA2, GRIA3, GRIA4, CNIH2, CNIH3, CACNG2, CACNG4, CACNG5, CACNG7 and CACNG8. Interacts with AP4M1 and GRIA1; associates GRIA1 with the adaptor protein complex 4 (AP-4) to target GRIA1 to the somatodendritic compartment of neurons.

The protein localises to the membrane. Its function is as follows. Regulates the trafficking and gating properties of AMPA-selective glutamate receptors (AMPARs). Promotes their targeting to the cell membrane and synapses and modulates their gating properties by slowing their rates of activation, deactivation and desensitization. Does not show subunit-specific AMPA receptor regulation and regulates all AMPAR subunits. Thought to stabilize the calcium channel in an inactivated (closed) state. This chain is Voltage-dependent calcium channel gamma-3 subunit (CACNG3), found in Bos taurus (Bovine).